The primary structure comprises 119 residues: Immunoglobulin heavy variable 2-5 (119 aa).

A signal peptide spans 1–19 (MDTLCSTLLLLTIPSWVLS). Gln20 is subject to Pyrrolidone carboxylic acid. The segment at 20–44 (QITLKESGPTLVKPTQTLTLTCTFS) is framework-1. Residues 20–119 (QITLKESGPT…DTATYYCAHR (100 aa)) form the Ig-like domain. Cys41 and Cys116 are disulfide-bonded. Positions 45–54 (GFSLSTSGVG) are complementarity-determining-1. A framework-2 region spans residues 55 to 71 (VGWIRQPPGKALEWLAL). Positions 72-78 (IYWDDDK) are complementarity-determining-2. A framework-3 region spans residues 79 to 116 (RYSPSLKSRLTITKDTSKNQVVLTMTNMDPVDTATYYC). The tract at residues 117 to 119 (AHR) is complementarity-determining-3.

As to quaternary structure, immunoglobulins are composed of two identical heavy chains and two identical light chains; disulfide-linked.

Its subcellular location is the secreted. It is found in the cell membrane. In terms of biological role, v region of the variable domain of immunoglobulin heavy chains that participates in the antigen recognition. Immunoglobulins, also known as antibodies, are membrane-bound or secreted glycoproteins produced by B lymphocytes. In the recognition phase of humoral immunity, the membrane-bound immunoglobulins serve as receptors which, upon binding of a specific antigen, trigger the clonal expansion and differentiation of B lymphocytes into immunoglobulins-secreting plasma cells. Secreted immunoglobulins mediate the effector phase of humoral immunity, which results in the elimination of bound antigens. The antigen binding site is formed by the variable domain of one heavy chain, together with that of its associated light chain. Thus, each immunoglobulin has two antigen binding sites with remarkable affinity for a particular antigen. The variable domains are assembled by a process called V-(D)-J rearrangement and can then be subjected to somatic hypermutations which, after exposure to antigen and selection, allow affinity maturation for a particular antigen. The protein is Immunoglobulin heavy variable 2-5 of Homo sapiens (Human).